A 448-amino-acid polypeptide reads, in one-letter code: C4-dicarboxylate transport protein 2 (448 aa).

9 consecutive transmembrane segments (helical) span residues 13 to 33, 49 to 69, 81 to 101, 149 to 169, 193 to 213, 227 to 247, 294 to 314, 335 to 355, and 357 to 377; these read SLYV…HFSP, LIKM…IAGM, LALL…LIVV, AFAK…GFAL, IVGI…AFTI, LMGA…GIVS, VVGL…SIYL, ITLL…TGSG, and IVLA…LALI.

This sequence belongs to the dicarboxylate/amino acid:cation symporter (DAACS) (TC 2.A.23) family.

It is found in the cell inner membrane. In terms of biological role, responsible for the transport of dicarboxylates such as succinate, fumarate, and malate from the periplasm across the membrane. The polypeptide is C4-dicarboxylate transport protein 2 (Polaromonas naphthalenivorans (strain CJ2)).